The sequence spans 195 residues: Small ribosomal subunit protein uS7 (195 aa).

It belongs to the universal ribosomal protein uS7 family. Part of the 30S ribosomal subunit.

Its function is as follows. One of the primary rRNA binding proteins, it binds directly to 16S rRNA where it nucleates assembly of the head domain of the 30S subunit. Is located at the subunit interface close to the decoding center. This is Small ribosomal subunit protein uS7 from Sulfolobus acidocaldarius (strain ATCC 33909 / DSM 639 / JCM 8929 / NBRC 15157 / NCIMB 11770).